The chain runs to 131 residues: Aspartate 1-decarboxylase (131 aa).

The active-site Schiff-base intermediate with substrate; via pyruvic acid is the serine 25. Serine 25 carries the pyruvic acid (Ser) modification. Threonine 57 serves as a coordination point for substrate. The Proton donor role is filled by tyrosine 58. 73-75 is a substrate binding site; the sequence is GAA.

This sequence belongs to the PanD family. In terms of assembly, heterooctamer of four alpha and four beta subunits. The cofactor is pyruvate. In terms of processing, is synthesized initially as an inactive proenzyme, which is activated by self-cleavage at a specific serine bond to produce a beta-subunit with a hydroxyl group at its C-terminus and an alpha-subunit with a pyruvoyl group at its N-terminus.

It localises to the cytoplasm. The enzyme catalyses L-aspartate + H(+) = beta-alanine + CO2. It participates in cofactor biosynthesis; (R)-pantothenate biosynthesis; beta-alanine from L-aspartate: step 1/1. Its function is as follows. Catalyzes the pyruvoyl-dependent decarboxylation of aspartate to produce beta-alanine. This chain is Aspartate 1-decarboxylase, found in Anaeromyxobacter sp. (strain K).